Here is a 1189-residue protein sequence, read N- to C-terminus: Pesticidal crystal protein Cry1Ca (1189 aa).

Belongs to the delta endotoxin family.

Its function is as follows. Promotes colloidosmotic lysis by binding to the midgut epithelial cells of many lepidopteran larvae including Spodoptera species. This Bacillus thuringiensis subsp. aizawai protein is Pesticidal crystal protein Cry1Ca (cry1Ca).